We begin with the raw amino-acid sequence, 979 residues long: Disks large-associated protein 3 (979 aa).

The segment covering 1-10 (MRGYHGDRGS) has biased composition (basic and acidic residues). Disordered regions lie at residues 1–20 (MRGY…FADQ), 52–95 (AGLG…MYPG), 136–169 (FHTL…SPSR), 182–291 (AKSH…CLEG), 400–429 (AMGD…TRRS), and 537–581 (FRKA…RCSS). Position 58 is a phosphoserine (serine 58). Residues 73–86 (PEGGPAGAGVGGGS) are compositionally biased toward gly residues. Basic and acidic residues predominate over residues 190 to 202 (PGKRDYNGPKAEG). A compositionally biased stretch (gly residues) spans 203-218 (RGGSGGDSYPGPGSGG). Basic residues predominate over residues 221–246 (TSHHHHHHHHHHHHQSRHGKRSKSKD). A phosphoserine mark is found at serine 406, serine 409, serine 412, and serine 416. The span at 540–549 (APPPIPPGSQ) shows a compositional bias: pro residues. 2 positions are modified to phosphoserine: serine 643 and serine 645. Disordered stretches follow at residues 741–790 (EGYP…RASP) and 908–940 (EEKK…DRQR). Basic and acidic residues-rich tracts occupy residues 769–779 (GRRDSWIERGS) and 927–940 (PVKE…DRQR). Serine 932, serine 935, and serine 967 each carry phosphoserine.

Belongs to the SAPAP family. Interacts with DLG4/PSD-95.

It localises to the cell membrane. Its subcellular location is the postsynaptic density. The protein resides in the synapse. In terms of biological role, may play a role in the molecular organization of synapses and neuronal cell signaling. Could be an adapter protein linking ion channel to the subsynaptic cytoskeleton. May induce enrichment of PSD-95/SAP90 at the plasma membrane. This Homo sapiens (Human) protein is Disks large-associated protein 3 (DLGAP3).